We begin with the raw amino-acid sequence, 246 residues long: 2,5-diamino-6-ribosylamino-4(3H)-pyrimidinone 5'-phosphate reductase (246 aa).

NADP(+)-binding positions include Thr78, Asp82, Leu163, and 186 to 190 (GAEVL).

This sequence belongs to the HTP reductase family. As to quaternary structure, homodimer.

It carries out the reaction 2,5-diamino-6-(1-D-ribitylamino)pyrimidin-4(3H)-one 5'-phosphate + NADP(+) = 2,5-diamino-6-(1-D-ribosylamino)pyrimidin-4(3H)-one 5'-phosphate + NADPH + H(+). The catalysed reaction is 2,5-diamino-6-(1-D-ribitylamino)pyrimidin-4(3H)-one 5'-phosphate + NAD(+) = 2,5-diamino-6-(1-D-ribosylamino)pyrimidin-4(3H)-one 5'-phosphate + NADH + H(+). It functions in the pathway cofactor biosynthesis; riboflavin biosynthesis. Its function is as follows. Catalyzes an early step in riboflavin biosynthesis, the NADPH-dependent reduction of the ribose side chain of 2,5-diamino-6-ribosylamino-4(3H)-pyrimidinone 5'-phosphate, yielding 2,5-diamino-6-ribitylamino-4(3H)-pyrimidinone 5'-phosphate. This Eremothecium gossypii (strain ATCC 10895 / CBS 109.51 / FGSC 9923 / NRRL Y-1056) (Yeast) protein is 2,5-diamino-6-ribosylamino-4(3H)-pyrimidinone 5'-phosphate reductase (RIB7).